The primary structure comprises 476 residues: Bifunctional protein HldE (476 aa).

Positions 1-319 are ribokinase; sequence MKVSLPAFEK…EALALHHGES (319 aa). 195-198 serves as a coordination point for ATP; the sequence is NMSE. The active site involves aspartate 264. The interval 345–476 is cytidylyltransferase; that stretch reads MTNGCFDILH…AIIQNIMANQ (132 aa).

It in the N-terminal section; belongs to the carbohydrate kinase PfkB family. The protein in the C-terminal section; belongs to the cytidylyltransferase family. Homodimer.

It catalyses the reaction D-glycero-beta-D-manno-heptose 7-phosphate + ATP = D-glycero-beta-D-manno-heptose 1,7-bisphosphate + ADP + H(+). The catalysed reaction is D-glycero-beta-D-manno-heptose 1-phosphate + ATP + H(+) = ADP-D-glycero-beta-D-manno-heptose + diphosphate. The protein operates within nucleotide-sugar biosynthesis; ADP-L-glycero-beta-D-manno-heptose biosynthesis; ADP-L-glycero-beta-D-manno-heptose from D-glycero-beta-D-manno-heptose 7-phosphate: step 1/4. It functions in the pathway nucleotide-sugar biosynthesis; ADP-L-glycero-beta-D-manno-heptose biosynthesis; ADP-L-glycero-beta-D-manno-heptose from D-glycero-beta-D-manno-heptose 7-phosphate: step 3/4. Functionally, catalyzes the phosphorylation of D-glycero-D-manno-heptose 7-phosphate at the C-1 position to selectively form D-glycero-beta-D-manno-heptose-1,7-bisphosphate. In terms of biological role, catalyzes the ADP transfer from ATP to D-glycero-beta-D-manno-heptose 1-phosphate, yielding ADP-D-glycero-beta-D-manno-heptose. This is Bifunctional protein HldE from Shewanella baltica (strain OS185).